A 216-amino-acid chain; its full sequence is Fibroblast growth factor 17 (216 aa).

Positions 1–22 are cleaved as a signal peptide; it reads MGAARLLPNLTLCLQLLILCCQ. Asparagine 137 is a glycosylation site (N-linked (GlcNAc...) asparagine). A disordered region spans residues 195-216; that stretch reads FEFVGSAPTRRTKRTRRPQSQT. Residues 204-216 are compositionally biased toward basic residues; the sequence is RRTKRTRRPQSQT.

It belongs to the heparin-binding growth factors family. Interacts with FGFR3 and FGFR4.

Its subcellular location is the secreted. Its function is as follows. Plays an important role in the regulation of embryonic development and as signaling molecule in the induction and patterning of the embryonic brain. Required for normal brain development. The chain is Fibroblast growth factor 17 (Fgf17) from Mus musculus (Mouse).